A 347-amino-acid polypeptide reads, in one-letter code: tRNA pseudouridine synthase D (347 aa).

The active-site Nucleophile is Asp81. The 147-residue stretch at 158 to 304 (GVPNYFGNQR…MRHDRRAIAL (147 aa)) folds into the TRUD domain.

This sequence belongs to the pseudouridine synthase TruD family.

The catalysed reaction is uridine(13) in tRNA = pseudouridine(13) in tRNA. Functionally, responsible for synthesis of pseudouridine from uracil-13 in transfer RNAs. The protein is tRNA pseudouridine synthase D of Vibrio vulnificus (strain YJ016).